Here is a 387-residue protein sequence, read N- to C-terminus: MSYRPYQQIERRKSRQIHVGKVAVGGDAPISVQTMTNTLTTDAEATIAQIRRAELAGVDIVRVSCPDQESTIALKEIVREVNVPIVADIHFHYRRAIEAAEAGAACLRINPGNIGSAERVREVVKAARDHGCAIRIGVNAGSLERHLLEKYGEPNPDALVESALEHAKILQDHDFHEFKISVKASDVFLAVAAYQQLAEVCDHPLHIGITEAGGRRTGTVKSAIGLGNLLWAGVGDTMRVSLSAEPEEEVHVGWEILKGLGLRHRGVKIISCPSCARQGFNVIETVAALEERLAHIQTPLTLSIIGCVVNGPGEALMTDIGLTGGGGGRHMIYNAGKTDHTIAADGMVDHIVTLVEEKAARIVEEEAAAKAAAEQAAQEAALQHETV.

4 residues coordinate [4Fe-4S] cluster: cysteine 272, cysteine 275, cysteine 307, and glutamate 314.

It belongs to the IspG family. Requires [4Fe-4S] cluster as cofactor.

The enzyme catalyses (2E)-4-hydroxy-3-methylbut-2-enyl diphosphate + oxidized [flavodoxin] + H2O + 2 H(+) = 2-C-methyl-D-erythritol 2,4-cyclic diphosphate + reduced [flavodoxin]. The protein operates within isoprenoid biosynthesis; isopentenyl diphosphate biosynthesis via DXP pathway; isopentenyl diphosphate from 1-deoxy-D-xylulose 5-phosphate: step 5/6. In terms of biological role, converts 2C-methyl-D-erythritol 2,4-cyclodiphosphate (ME-2,4cPP) into 1-hydroxy-2-methyl-2-(E)-butenyl 4-diphosphate. The chain is 4-hydroxy-3-methylbut-2-en-1-yl diphosphate synthase (flavodoxin) from Granulibacter bethesdensis (strain ATCC BAA-1260 / CGDNIH1).